A 149-amino-acid polypeptide reads, in one-letter code: Putative pre-16S rRNA nuclease (149 aa).

The protein belongs to the YqgF nuclease family.

It is found in the cytoplasm. Its function is as follows. Could be a nuclease involved in processing of the 5'-end of pre-16S rRNA. The chain is Putative pre-16S rRNA nuclease from Heliobacterium modesticaldum (strain ATCC 51547 / Ice1).